A 129-amino-acid polypeptide reads, in one-letter code: UPF0325 protein Ent638_0703 (129 aa).

This sequence belongs to the UPF0325 family.

In Enterobacter sp. (strain 638), this protein is UPF0325 protein Ent638_0703.